Consider the following 188-residue polypeptide: Calcium load-activated calcium channel (188 aa).

At Met-1–Met-4 the chain is on the lumenal side. A helical transmembrane segment spans residues Phe-5–Arg-32. Residues Arg-32–Lys-89 adopt a coiled-coil conformation. Topologically, residues Thr-33 to Val-86 are cytoplasmic. Ser-60 carries the post-translational modification Phosphoserine. Residues Arg-87 to Asn-106 traverse the membrane as a helical segment. Residues Ser-107–Thr-120 lie on the Lumenal side of the membrane. The stretch at Pro-121 to His-130 is an intramembrane region. Residues Arg-131–Asp-140 lie on the Lumenal side of the membrane. The helical transmembrane segment at Cys-141–Leu-162 threads the bilayer. Topologically, residues Gly-163–Ser-188 are cytoplasmic. At Ser-188 the chain carries Phosphoserine.

It belongs to the TMCO1 family. In terms of assembly, homodimer and homotetramer. Homodimer under resting conditions; forms homotetramers following ER calcium overload. Component of the GET- and EMC-like (GEL) complex, composed of RAB5IF/OPTI and TMCO1. The GEL complex is part of the multi-pass translocon (MPT) complex, composed of three subcomplexes, the GEL complex (composed of RAB5IF/OPTI and TMCO1), the BOS complex (composed of NCLN/Nicalin, NOMO1 and TMEM147) and the PAT complex (composed of WDR83OS/Asterix and CCDC47). The MPT complex associates with the SEC61 complex.

It localises to the endoplasmic reticulum membrane. The protein resides in the golgi apparatus membrane. It is found in the mitochondrion membrane. It catalyses the reaction Ca(2+)(in) = Ca(2+)(out). Its function is as follows. Endoplasmic reticulum (ER) calcium-selective channel preventing intracellular Ca2(+) stores from overfilling and maintaining calcium homeostasis in the ER. In response to endoplasmic reticulum (ER) Ca2(+) overloading, assembles into a homotetramer, forming a functional calcium-selective channel facilitating Ca2(+) release. Mediates ER Ca2(+) homeostasis in osteoblasts and plays a key role in bone formation, via the CaMKII-HDAC4-RUNX2 signaling axis. Component of the multi-pass translocon (MPT) complex that mediates insertion of multi-pass membrane proteins into the lipid bilayer of membranes. The MPT complex takes over after the SEC61 complex: following membrane insertion of the first few transmembrane segments of proteins by the SEC61 complex, the MPT complex occludes the lateral gate of the SEC61 complex to promote insertion of subsequent transmembrane regions. Within the MPT complex, the GEL subcomplex may mediate insertion of transmembrane regions into the membrane. The sequence is that of Calcium load-activated calcium channel from Bos taurus (Bovine).